The chain runs to 385 residues: S-adenosylmethionine synthase (385 aa).

His14 provides a ligand contact to ATP. A Mg(2+)-binding site is contributed by Asp16. Glu42 is a K(+) binding site. Glu55 and Gln98 together coordinate L-methionine. The tract at residues Gln98–Asn108 is flexible loop. ATP contacts are provided by residues Asp165–Lys167, Arg232–Phe233, Asp241, Arg247–Lys248, Ala264, and Lys268. Residue Asp241 coordinates L-methionine. Lys272 provides a ligand contact to L-methionine.

Belongs to the AdoMet synthase family. Homotetramer; dimer of dimers. Mg(2+) is required as a cofactor. It depends on K(+) as a cofactor.

It is found in the cytoplasm. The catalysed reaction is L-methionine + ATP + H2O = S-adenosyl-L-methionine + phosphate + diphosphate. The protein operates within amino-acid biosynthesis; S-adenosyl-L-methionine biosynthesis; S-adenosyl-L-methionine from L-methionine: step 1/1. Its function is as follows. Catalyzes the formation of S-adenosylmethionine (AdoMet) from methionine and ATP. The overall synthetic reaction is composed of two sequential steps, AdoMet formation and the subsequent tripolyphosphate hydrolysis which occurs prior to release of AdoMet from the enzyme. This Leuconostoc mesenteroides subsp. mesenteroides (strain ATCC 8293 / DSM 20343 / BCRC 11652 / CCM 1803 / JCM 6124 / NCDO 523 / NBRC 100496 / NCIMB 8023 / NCTC 12954 / NRRL B-1118 / 37Y) protein is S-adenosylmethionine synthase.